Reading from the N-terminus, the 858-residue chain is Piwi-like protein 1 (858 aa).

Over residues 1–13 (MTGRARARSRGRG) the composition is skewed to basic residues. The disordered stretch occupies residues 1-56 (MTGRARARSRGRGRGQEPAAPGAQPPVSQEAAKPVVSTPSEGQLVGRGRQKPAPGA). A compositionally biased stretch (low complexity) spans 16-26 (QEPAAPGAQPP). Residues 276–388 (TVLDFMYSLR…LVPEFCYLTG (113 aa)) enclose the PAZ domain. The interval 314-316 (TYR) is required for binding 2'-O-methylated 3'-end of piRNAs. Positions 476 to 612 (SKEMRGLPLI…LQMNCKMGGE (137 aa)) are MID region. Positions 552–844 (MVVVILPTNR…LAFLVGQSIH (293 aa)) constitute a Piwi domain. Active-site residues include Asp-629, Glu-667, Asp-699, and His-833.

It belongs to the argonaute family. Piwi subfamily. Mg(2+) is required as a cofactor. Post-translationally, methylated on arginine residues; required for the interaction with Tudor domain-containing protein and subsequent localization to the meiotic nuage, also named P granule. Expressed exclusively in the adult gonads; expression in the ovary weaker than in the testis (at protein level). During neurogenesis and organogenesis, expression is detected in CNS (midbrain and eye) and fin buds. Starting from 24 hours post-fertilization, expression is found in the genital ridge.

The protein localises to the cytoplasm. In terms of biological role, plays a central role during gametogenesis by repressing transposable elements and preventing their mobilization, which is essential for the germline integrity. Acts via the piRNA metabolic process, which mediates the repression of transposable elements during meiosis by forming complexes composed of piRNAs and Piwi proteins and governs the methylation and subsequent repression of transposons. Directly binds methylated piRNAs, a class of 24 to 30 nucleotide RNAs that are generated by a Dicer-independent mechanism and are primarily derived from transposons and other repeated sequence elements. Has a strong preference for piRNAs with a uridine nucleotide at their 5'-end (g1U preference, also named 1U-bias) and binds piRNAs in an opposite direction compared to piwil2/zili. Participates in a piRNA amplification loop with piwil2/zili. Not involved in the piRNA amplification loop, also named ping-pong amplification cycle. Acts as an endoribonuclease that cleaves transposon messenger RNAs. This Danio rerio (Zebrafish) protein is Piwi-like protein 1 (piwil1).